Here is a 209-residue protein sequence, read N- to C-terminus: Large ribosomal subunit protein uL3 (209 aa).

Residues 132-153 (ATHGNSLSHRVPGSIGQNQTPG) form a disordered region. Position 150 is an N5-methylglutamine (glutamine 150).

This sequence belongs to the universal ribosomal protein uL3 family. As to quaternary structure, part of the 50S ribosomal subunit. Forms a cluster with proteins L14 and L19. In terms of processing, methylated by PrmB.

Functionally, one of the primary rRNA binding proteins, it binds directly near the 3'-end of the 23S rRNA, where it nucleates assembly of the 50S subunit. This chain is Large ribosomal subunit protein uL3, found in Erwinia tasmaniensis (strain DSM 17950 / CFBP 7177 / CIP 109463 / NCPPB 4357 / Et1/99).